Consider the following 489-residue polypeptide: Arginine biosynthesis bifunctional protein ArgJ 2, mitochondrial (489 aa).

A mitochondrion-targeting transit peptide spans 1–11 (MLLISRIGARH). Substrate is bound by residues Thr-205, Lys-234, Thr-245, Glu-341, and Asn-484. Thr-245 (nucleophile) is an active-site residue.

Belongs to the ArgJ family. Heterodimer of an alpha and a beta chain. The alpha and beta chains are autoproteolytically processed from a single precursor protein within the mitochondrion.

It localises to the mitochondrion matrix. The catalysed reaction is N(2)-acetyl-L-ornithine + L-glutamate = N-acetyl-L-glutamate + L-ornithine. It carries out the reaction L-glutamate + acetyl-CoA = N-acetyl-L-glutamate + CoA + H(+). It participates in amino-acid biosynthesis; L-arginine biosynthesis; L-ornithine and N-acetyl-L-glutamate from L-glutamate and N(2)-acetyl-L-ornithine (cyclic): step 1/1. It functions in the pathway amino-acid biosynthesis; L-arginine biosynthesis; N(2)-acetyl-L-ornithine from L-glutamate: step 1/4. Functionally, catalyzes two activities which are involved in the cyclic version of arginine biosynthesis: the synthesis of acetylglutamate from glutamate and acetyl-CoA, and of ornithine by transacetylation between acetylornithine and glutamate. This Sclerotinia sclerotiorum (strain ATCC 18683 / 1980 / Ss-1) (White mold) protein is Arginine biosynthesis bifunctional protein ArgJ 2, mitochondrial.